Reading from the N-terminus, the 680-residue chain is WD repeat-containing protein 48 homolog (680 aa).

8 WD repeats span residues 26–65, 71–110, 113–152, 164–203, 206–245, 248–287, 290–329, and 350–389; these read QHRN…SEKY, HHND…CMST, THRD…ALTA, GSKD…RSMK, GHTE…CVQT, VHKE…NKTL, EEQA…RCTM, and KGGA…KKEQ. A disordered region spans residues 592–616; the sequence is ETTPSGGNANNSLQNSQSDANSEGS.

Belongs to the WD repeat WDR48 family. As to quaternary structure, catalytic component of the Usp12-46 deubiquitylase complex consisting of Usp12-46, Wdr20 and Uaf1; regulatory subunit that, together wtih Wdr20, stabilizes Usp12-46. The Usp12-46 deubiquitylase complex associates with arr/arrow; the interaction leads to deubiquitination and stabilization of arr/arrow.

In terms of biological role, regulatory component of the Usp12-46 deubiquitylase complex. activates deubiquitination by increasing the catalytic turnover without increasing the affinity of deubiquitinating enzymes for the substrate. The complex deubiquitylates the wg/wingless-signaling receptor arr/arrow, which stabilizes the receptor and increases its concentration at the cell surface; this enhances the sensitivity of cells to wg/wingless-signal stimulation. This increases the amplitude and spatial range of the signaling response to the wg/wingless morphogen gradient, facilitating the precise concentration-dependent regulation of its target genes. Together with Wdr20 and Usp12-46 required for wg/wingless-mediated signaling in the wing imaginal disc and for wg/wingless-dependent regulation of intestinal stem cell proliferation. The protein is WD repeat-containing protein 48 homolog of Drosophila yakuba (Fruit fly).